The following is a 156-amino-acid chain: Small ribosomal subunit protein uS7 (156 aa).

It belongs to the universal ribosomal protein uS7 family. Part of the 30S ribosomal subunit. Contacts proteins S9 and S11.

Functionally, one of the primary rRNA binding proteins, it binds directly to 16S rRNA where it nucleates assembly of the head domain of the 30S subunit. Is located at the subunit interface close to the decoding center, probably blocks exit of the E-site tRNA. This is Small ribosomal subunit protein uS7 from Geobacter sp. (strain M21).